The primary structure comprises 536 residues: Pre-mRNA-splicing factor SLU7-B (536 aa).

The interval 1–42 is disordered; the sequence is MATASVAFKSREDHRKKLELEEARKAGLAPAEVDEDGKEINP. The segment covering 9–25 has biased composition (basic and acidic residues); it reads KSREDHRKKLELEEARK. The CCHC-type zinc finger occupies 96-109; that stretch reads CINCGAMTHSSKAC. Disordered stretches follow at residues 176–201 and 488–507; these read LKKL…DLDD and KEDL…YNVN. Over residues 187-200 the composition is skewed to acidic residues; that stretch reads NGDDATSDGEEDLD. Ser193 bears the Phosphoserine mark. The short motif at 486 to 493 is the Nuclear localization signal element; sequence LKKEDLSR. The segment covering 488-501 has biased composition (basic and acidic residues); the sequence is KEDLSRREEKDERK.

This sequence belongs to the SLU7 family. As to quaternary structure, interacts with PHYB in photobodies under red light.

It is found in the nucleus. Functionally, participates in the second catalytic step of pre-mRNA splicing, when the free hydroxyl group of exon I attacks the 3'-splice site to generate spliced mRNA and the excised lariat intron. Splicing factor acting as a negative regulator of seedling photomorphogenesis by antagonizing PHYB signaling to promote light-induced hypocotyl elongation. Prevents the accumulation of functionally spliced RVE8a form, a circadian clock regulator mediating the transcriptional activation of clock genes containing evening elements (EE), but promotes PIF4 expression to fine-tune hypocotyl elongation in the light. Together with SMP1, involved in the timing of cell cycle arrest during leaf development, in a STRUWWELPETER (SWP) dependent manner; promotes cell proliferation in developing organs. This Arabidopsis thaliana (Mouse-ear cress) protein is Pre-mRNA-splicing factor SLU7-B.